A 1140-amino-acid chain; its full sequence is DNA damage-binding protein 1 (1140 aa).

This sequence belongs to the DDB1 family. In terms of assembly, component of the UV-DDB complex which includes DDB1 and DDB2; the heterodimer dimerizes to give rise to a heterotetramer when bound to damaged DNA. The UV-DDB complex interacts with monoubiquitinated histone H2A and binds to XPC via the DDB2 subunit. Component of numerous DCX (DDB1-CUL4-X-box) E3 ubiquitin-protein ligase complexes which consist of a core of DDB1, CUL4A or CUL4B and RBX1. DDB1 may recruit specific substrate targeting subunits to the DCX complex. These substrate targeting subunits are generally known as DCAF (DDB1- and CUL4-associated factor) or CDW (CUL4-DDB1-associated WD40-repeat) proteins. Interacts with Fbw5 and gig. May interact with ohgt.

The protein resides in the cytoplasm. The protein localises to the nucleus. It participates in protein modification; protein ubiquitination. Its function is as follows. Protein, which is both involved in DNA repair and protein ubiquitination, as part of the UV-DDB complex and DCX (DDB1-CUL4-X-box) complexes, respectively. Core component of the UV-DDB complex (UV-damaged DNA-binding protein complex), a complex that recognizes UV-induced DNA damage and recruit proteins of the nucleotide excision repair pathway (the NER pathway) to initiate DNA repair. The UV-DDB complex preferentially binds to cyclobutane pyrimidine dimers (CPD), 6-4 photoproducts (6-4 PP), apurinic sites and short mismatches. Also functions as a component of numerous distinct DCX (DDB1-CUL4-X-box) E3 ubiquitin-protein ligase complexes which mediate the ubiquitination and subsequent proteasomal degradation of target proteins. The functional specificity of the DCX E3 ubiquitin-protein ligase complex is determined by the variable substrate recognition component recruited by DDB1. Required for degradation of gig. Required for genomic stability in the face of endogenous DNA lesions and for the response to MMS-induced DNA damage. Required for normal wing development. In Drosophila melanogaster (Fruit fly), this protein is DNA damage-binding protein 1 (pic).